The following is a 446-amino-acid chain: tRNA-2-methylthio-N(6)-dimethylallyladenosine synthase (446 aa).

The 117-residue stretch at K3–K119 folds into the MTTase N-terminal domain. [4Fe-4S] cluster-binding residues include C12, C48, C82, C158, C162, and C165. One can recognise a Radical SAM core domain in the interval K144–K374. Residues K377–E439 enclose the TRAM domain.

The protein belongs to the methylthiotransferase family. MiaB subfamily. Monomer. It depends on [4Fe-4S] cluster as a cofactor.

The protein resides in the cytoplasm. The catalysed reaction is N(6)-dimethylallyladenosine(37) in tRNA + (sulfur carrier)-SH + AH2 + 2 S-adenosyl-L-methionine = 2-methylsulfanyl-N(6)-dimethylallyladenosine(37) in tRNA + (sulfur carrier)-H + 5'-deoxyadenosine + L-methionine + A + S-adenosyl-L-homocysteine + 2 H(+). In terms of biological role, catalyzes the methylthiolation of N6-(dimethylallyl)adenosine (i(6)A), leading to the formation of 2-methylthio-N6-(dimethylallyl)adenosine (ms(2)i(6)A) at position 37 in tRNAs that read codons beginning with uridine. This is tRNA-2-methylthio-N(6)-dimethylallyladenosine synthase from Pelagibacter ubique (strain HTCC1062).